The sequence spans 475 residues: Ribulose bisphosphate carboxylase large chain (475 aa).

Residues 1-2 (MS) constitute a propeptide that is removed on maturation. An N-acetylproline modification is found at Pro3. Lys14 is modified (N6,N6,N6-trimethyllysine). Substrate is bound by residues Asn123 and Thr173. The active-site Proton acceptor is Lys175. A substrate-binding site is contributed by Lys177. Lys201, Asp203, and Glu204 together coordinate Mg(2+). Position 201 is an N6-carboxylysine (Lys201). His294 (proton acceptor) is an active-site residue. 3 residues coordinate substrate: Arg295, His327, and Ser379.

This sequence belongs to the RuBisCO large chain family. Type I subfamily. Heterohexadecamer of 8 large chains and 8 small chains; disulfide-linked. The disulfide link is formed within the large subunit homodimers. Requires Mg(2+) as cofactor. The disulfide bond which can form in the large chain dimeric partners within the hexadecamer appears to be associated with oxidative stress and protein turnover.

It is found in the plastid. The protein resides in the chloroplast. It carries out the reaction 2 (2R)-3-phosphoglycerate + 2 H(+) = D-ribulose 1,5-bisphosphate + CO2 + H2O. The enzyme catalyses D-ribulose 1,5-bisphosphate + O2 = 2-phosphoglycolate + (2R)-3-phosphoglycerate + 2 H(+). RuBisCO catalyzes two reactions: the carboxylation of D-ribulose 1,5-bisphosphate, the primary event in carbon dioxide fixation, as well as the oxidative fragmentation of the pentose substrate in the photorespiration process. Both reactions occur simultaneously and in competition at the same active site. The sequence is that of Ribulose bisphosphate carboxylase large chain from Pelargonium hortorum (Common geranium).